A 144-amino-acid chain; its full sequence is Large ribosomal subunit protein uL13 (144 aa).

This sequence belongs to the universal ribosomal protein uL13 family. In terms of assembly, part of the 50S ribosomal subunit.

In terms of biological role, this protein is one of the early assembly proteins of the 50S ribosomal subunit, although it is not seen to bind rRNA by itself. It is important during the early stages of 50S assembly. The protein is Large ribosomal subunit protein uL13 of Pelotomaculum thermopropionicum (strain DSM 13744 / JCM 10971 / SI).